The chain runs to 136 residues: MLDNGFSFPVRVYYEDTDAGGVVYHARYLHFFERARTEYLRTLNFTQQTLLEEQQLAFVVKTLAIDYCVAAKLDDLLMVETEVSEVKGATILFEQRLMRNTLMLSKATVKVACVDLGKMKPVAFPKEVKAAFHHLK.

Aspartate 18 is a catalytic residue.

It belongs to the 4-hydroxybenzoyl-CoA thioesterase family.

In terms of biological role, displays acyl-CoA thioesterase activity with short chain aliphatic acyl-CoA thioesters, such as propionyl-CoA and butyryl-CoA. Enzyme activity is relatively low, suggesting that the acyl-CoA thioesters used in the assays are not the physiological substrates. Has no detectable activity with 4-hydroxybenzoyl-CoA, lauroyl-CoA (C12:0), arachidoyl-CoA (C20:0) and arachidonoyl-CoA (C20:4). This Haemophilus influenzae (strain ATCC 51907 / DSM 11121 / KW20 / Rd) protein is Acyl-CoA thioesterase YbgC (ybgC).